Reading from the N-terminus, the 441-residue chain is Probable membrane metalloprotease ARASP2, chloroplastic (441 aa).

A chloroplast-targeting transit peptide spans 1 to 84 (MLLNISSSPI…DFGSLESVLE (84 aa)). His96 contacts Zn(2+). Glu97 is a catalytic residue. His100 serves as a coordination point for Zn(2+). A helical membrane pass occupies residues 171–191 (VIVVSAGIVANVIFAYAIIFT). In terms of domain architecture, PDZ spans 196–249 (VGLPVQESFPGVLVPDVKSFSAASRDGLLPGDVILAVDGTELSNSGSDSVSKVV). 2 helical membrane passes run 373 to 393 (LAVI…ALIL) and 407 to 427 (VEQG…LFLI).

Belongs to the peptidase M50A family. Zn(2+) serves as cofactor.

Its subcellular location is the plastid. It is found in the chloroplast inner membrane. Its function is as follows. Metalloprotease essential for chloroplast and plant development. May be involved in regulated intramembrane proteolysis (RIP). In Arabidopsis thaliana (Mouse-ear cress), this protein is Probable membrane metalloprotease ARASP2, chloroplastic.